Consider the following 120-residue polypeptide: Cytochrome c oxidase subunit 5 (120 aa).

The residue at position 2 (S2) is a Blocked amino end (Ser). The Zn(2+) site is built by C76, H84, C99, and C102.

The protein belongs to the cytochrome c oxidase subunit 5B family. Component of the cytochrome c oxidase (complex IV, CIV), a multisubunit enzyme composed of a catalytic core of 3 subunits and several supernumerary subunits. The complex exists as a monomer or a dimer and forms supercomplexes (SCs) in the inner mitochondrial membrane with ubiquinol-cytochrome c oxidoreductase (cytochrome b-c1 complex, complex III, CIII). Slime mold cytochrome c oxidase consists of at least seven different polypeptides species, subunits I, II, III, IV, V, VI, and VIIe/s in order of MW.

Its subcellular location is the mitochondrion inner membrane. It functions in the pathway energy metabolism; oxidative phosphorylation. Component of the cytochrome c oxidase, the last enzyme in the mitochondrial electron transport chain which drives oxidative phosphorylation. The respiratory chain contains 3 multisubunit complexes succinate dehydrogenase (complex II, CII), ubiquinol-cytochrome c oxidoreductase (cytochrome b-c1 complex, complex III, CIII) and cytochrome c oxidase (complex IV, CIV), that cooperate to transfer electrons derived from NADH and succinate to molecular oxygen, creating an electrochemical gradient over the inner membrane that drives transmembrane transport and the ATP synthase. Cytochrome c oxidase is the component of the respiratory chain that catalyzes the reduction of oxygen to water. Electrons originating from reduced cytochrome c in the intermembrane space (IMS) are transferred via the dinuclear copper A center (CU(A)) of subunit 2 and heme A of subunit 1 to the active site in subunit 1, a binuclear center (BNC) formed by heme A3 and copper B (CU(B)). The BNC reduces molecular oxygen to 2 water molecules using 4 electrons from cytochrome c in the IMS and 4 protons from the mitochondrial matrix. This Dictyostelium discoideum (Social amoeba) protein is Cytochrome c oxidase subunit 5 (cxeA).